We begin with the raw amino-acid sequence, 460 residues long: GTPase Der (460 aa).

EngA-type G domains lie at 2-166 and 175-353; these read KTIA…AEER and TRIA…QERK. Residues 8–15, 55–59, 118–121, 181–188, 228–232, and 293–296 each bind GTP; these read GRPNVGKS, DTGGL, NKLD, GQPNAGKS, DTAGL, and NKID. Positions 354 to 446 constitute a KH-like domain; the sequence is KRIPTHRLTQ…LLWKWRKAEG (93 aa).

Belongs to the TRAFAC class TrmE-Era-EngA-EngB-Septin-like GTPase superfamily. EngA (Der) GTPase family. As to quaternary structure, associates with the 50S ribosomal subunit.

GTPase that plays an essential role in the late steps of ribosome biogenesis. The sequence is that of GTPase Der from Methylacidiphilum infernorum (isolate V4) (Methylokorus infernorum (strain V4)).